The primary structure comprises 910 residues: Protein translocase subunit SecA (910 aa).

Residues Gln-87, 105–109 (GEGKT), and Asp-508 each bind ATP. The interval 848–910 (RLSQSQFQHQ…KYKHCHGQLS (63 aa)) is disordered. Low complexity predominate over residues 869–880 (AQVQAAQQGVAQ). Zn(2+) is bound by residues Cys-894, Cys-896, Cys-905, and His-906. Positions 900–910 (KKYKHCHGQLS) are enriched in basic residues.

Belongs to the SecA family. Monomer and homodimer. Part of the essential Sec protein translocation apparatus which comprises SecA, SecYEG and auxiliary proteins SecDF-YajC and YidC. Requires Zn(2+) as cofactor.

Its subcellular location is the cell inner membrane. It is found in the cytoplasm. The enzyme catalyses ATP + H2O + cellular proteinSide 1 = ADP + phosphate + cellular proteinSide 2.. Part of the Sec protein translocase complex. Interacts with the SecYEG preprotein conducting channel. Has a central role in coupling the hydrolysis of ATP to the transfer of proteins into and across the cell membrane, serving both as a receptor for the preprotein-SecB complex and as an ATP-driven molecular motor driving the stepwise translocation of polypeptide chains across the membrane. In Stenotrophomonas maltophilia (strain K279a), this protein is Protein translocase subunit SecA.